A 251-amino-acid polypeptide reads, in one-letter code: Hydroxyacylglutathione hydrolase (251 aa).

Residues His53, His55, Asp57, His58, His110, Asp127, and His165 each contribute to the Zn(2+) site.

It belongs to the metallo-beta-lactamase superfamily. Glyoxalase II family. In terms of assembly, monomer. It depends on Zn(2+) as a cofactor.

It catalyses the reaction an S-(2-hydroxyacyl)glutathione + H2O = a 2-hydroxy carboxylate + glutathione + H(+). The protein operates within secondary metabolite metabolism; methylglyoxal degradation; (R)-lactate from methylglyoxal: step 2/2. Thiolesterase that catalyzes the hydrolysis of S-D-lactoyl-glutathione to form glutathione and D-lactic acid. The polypeptide is Hydroxyacylglutathione hydrolase (Salmonella typhi).